A 281-amino-acid polypeptide reads, in one-letter code: Pre T-cell antigen receptor alpha (281 aa).

The signal sequence occupies residues Met1 to Gly23. Topologically, residues Thr24–Gly146 are extracellular. The cysteines at positions 47 and 107 are disulfide-linked. Asn67 is a glycosylation site (N-linked (GlcNAc...) asparagine). Residues Ala147–Leu167 form a helical membrane-spanning segment. Over Thr168–Ala281 the chain is Cytoplasmic. Positions Leu196–Val233 are disordered.

In terms of assembly, heterodimer with TCRB; disulfide linked. This heterodimer assembles with CD3 proteins into a signaling-competent pre-T-cell receptor complex. Interacts with RHBDD1. Expressed in immature but not mature T-cells. Also found in CD34+ cells from peripheral blood, CD34+ precursors from umbilical cord blood and adult bone marrow.

It localises to the membrane. Its subcellular location is the cell membrane. Its function is as follows. Component of the pre-T-cell receptor complex (composed of PTCRA, TCRB and the CD3 complex) that has a crucial role in early T-cell development, particularly alpha-beta T cell differentiation. The chain is Pre T-cell antigen receptor alpha from Homo sapiens (Human).